The chain runs to 365 residues: DNA polymerase IV (365 aa).

In terms of domain architecture, UmuC spans 7 to 188 (IIHIDMDAFY…LPVNKFFGVG (182 aa)). Residues D11 and D106 each contribute to the Mg(2+) site. Residue E107 is part of the active site.

The protein belongs to the DNA polymerase type-Y family. Monomer. Mg(2+) is required as a cofactor.

It is found in the cytoplasm. The catalysed reaction is DNA(n) + a 2'-deoxyribonucleoside 5'-triphosphate = DNA(n+1) + diphosphate. In terms of biological role, poorly processive, error-prone DNA polymerase involved in untargeted mutagenesis. Copies undamaged DNA at stalled replication forks, which arise in vivo from mismatched or misaligned primer ends. These misaligned primers can be extended by PolIV. Exhibits no 3'-5' exonuclease (proofreading) activity. May be involved in translesional synthesis, in conjunction with the beta clamp from PolIII. In Clostridioides difficile (strain 630) (Peptoclostridium difficile), this protein is DNA polymerase IV.